A 536-amino-acid polypeptide reads, in one-letter code: DEAD-box ATP-dependent RNA helicase 26 (536 aa).

Positions 1–44 (MMSGGPSDATHRKRRRRRGPKGSGVDGPSIPRAVTTNGAGPEEE) are disordered. The span at 11 to 20 (HRKRRRRRGP) shows a compositional bias: basic residues. The short motif at 74-102 (TRFDQCPVSPLSLKAIKDAGYEKMTQVQE) is the Q motif element. The 178-residue stretch at 105-282 (LPIILQGEDV…HIAMKRGYKF (178 aa)) folds into the Helicase ATP-binding domain. Residue 118 to 125 (AKTGTGKT) participates in ATP binding. The DEAD box motif lies at 230-233 (DEAD). Positions 316–466 (VLKKHIAEDA…SIQTGVKDAL (151 aa)) constitute a Helicase C-terminal domain.

The protein belongs to the DEAD box helicase family.

The catalysed reaction is ATP + H2O = ADP + phosphate + H(+). The sequence is that of DEAD-box ATP-dependent RNA helicase 26 from Oryza sativa subsp. japonica (Rice).